The chain runs to 318 residues: Cytosolic Fe-S cluster assembly factor Nubp1 homolog (318 aa).

Residues 1 to 15 are compositionally biased toward basic and acidic residues; sequence MSAPEVENKPADAPE. A disordered region spans residues 1–29; it reads MSAPEVENKPADAPEHCPGTESENAGKAS. Residues cysteine 17, cysteine 31, cysteine 34, and cysteine 40 each contribute to the [4Fe-4S] cluster site. 70–77 is a binding site for ATP; that stretch reads GKGGVGKS. [4Fe-4S] cluster-binding residues include cysteine 245 and cysteine 248.

Belongs to the Mrp/NBP35 ATP-binding proteins family. NUBP1/NBP35 subfamily. As to quaternary structure, heterotetramer of 2 Nubp1 and 2 Nubp2 chains. Requires [4Fe-4S] cluster as cofactor.

It is found in the cytoplasm. In terms of biological role, component of the cytosolic iron-sulfur (Fe/S) protein assembly (CIA) machinery. Required for maturation of extramitochondrial Fe-S proteins. The Nubp1-Nubp2 heterotetramer forms a Fe-S scaffold complex, mediating the de novo assembly of an Fe-S cluster and its transfer to target apoproteins. This Aedes aegypti (Yellowfever mosquito) protein is Cytosolic Fe-S cluster assembly factor Nubp1 homolog.